Here is a 78-residue protein sequence, read N- to C-terminus: Beta-defensin 12 (78 aa).

Residues 1–27 form the signal peptide; it reads MALSRGTFYFGLALFFIVVELPSGSWA. 3 cysteine pairs are disulfide-bonded: C46/C73, C53/C67, and C57/C74.

This sequence belongs to the beta-defensin family.

The protein localises to the secreted. Has antibacterial activity. In Rattus norvegicus (Rat), this protein is Beta-defensin 12 (Defb12).